Here is a 389-residue protein sequence, read N- to C-terminus: Stilbene synthase 1 (389 aa).

A substrate-binding site is contributed by 55-58 (KFQR). The active site involves Cys-164. Residues Leu-267 and 305–307 (GGR) contribute to the substrate site.

This sequence belongs to the thiolase-like superfamily. Chalcone/stilbene synthases family. In terms of assembly, homodimer.

The protein resides in the cytoplasm. It carries out the reaction 4-coumaroyl-CoA + 3 malonyl-CoA + 3 H(+) = trans-resveratrol + 4 CO2 + 4 CoA. Its pathway is phytoalexin biosynthesis; 3,4',5-trihydroxystilbene biosynthesis; 3,4',5-trihydroxystilbene from trans-4-coumarate: step 2/2. In Arachis hypogaea (Peanut), this protein is Stilbene synthase 1.